Here is a 146-residue protein sequence, read N- to C-terminus: Hemoglobin subunit beta (146 aa).

In terms of domain architecture, Globin spans 2–146 (HWTAEEKQLI…VAHALARKYH (145 aa)). The heme b site is built by histidine 63 and histidine 92.

The protein belongs to the globin family. As to quaternary structure, heterotetramer of two alpha chains and two beta chains. In terms of tissue distribution, red blood cells.

In terms of biological role, involved in oxygen transport from the lung to the various peripheral tissues. This is Hemoglobin subunit beta (HBB) from Phalacrocorax carbo (Great cormorant).